The chain runs to 540 residues: ADP,ATP carrier protein 2 (540 aa).

A run of 12 helical transmembrane segments spans residues 23–43 (FSKF…YALL), 61–81 (VIPF…TMIY), 93–113 (VFIS…TVIY), 150–170 (LYYV…FWGV), 185–205 (ALIN…SLWL), 222–242 (EVLL…LYLY), 292–312 (LLGI…FEVV), 334–354 (ITTL…GQTI), 361–381 (IGAL…FGAI), 389–409 (MIFG…LGGV), 455–475 (SGGS…AASL), and 477–497 (AITI…AWLG).

It belongs to the ADP/ATP translocase tlc family.

It is found in the cell membrane. The sequence is that of ADP,ATP carrier protein 2 (tlcB) from Chlamydia trachomatis serovar D (strain ATCC VR-885 / DSM 19411 / UW-3/Cx).